We begin with the raw amino-acid sequence, 264 residues long: Inner membrane ABC transporter permease protein YdcV (264 aa).

The Cytoplasmic segment spans residues 1 to 12 (MHSERAPFFLKL). The chain crosses the membrane as a helical span at residues 13–33 (AAWGGVVFLHFPILIIAAYAF). Residues 34-70 (NTEDAAFSFPPQGLTLRWFSVAAQRSDILDAVTLSLK) are Periplasmic-facing. Residues 65–252 (VTLSLKVAAL…MLVTTLPILG (188 aa)) form the ABC transmembrane type-1 domain. A helical membrane pass occupies residues 71–91 (VAALATLIALVLGTLAAAALW). Over 92-100 (RRDFFGKNA) the chain is Cytoplasmic. The chain crosses the membrane as a helical span at residues 101–121 (ISLLLLLPIALPGIVTGLALL). Residues 122 to 128 (TAFKTIN) lie on the Periplasmic side of the membrane. A helical transmembrane segment spans residues 129–149 (LEPGFFTIVVGHATFCVVVVF). Residues 150 to 189 (NNVIARFRRTSWSLVEASMDLGANGWQTFRYVVLPNLSSA) lie on the Cytoplasmic side of the membrane. Residues 190-210 (LLAGGMLAFALSFDEIIVTTF) traverse the membrane as a helical segment. Over 211 to 236 (TAGHERTLPLWLLNQLGRPRDVPVTN) the chain is Periplasmic. Residues 237–257 (VVALLVMLVTTLPILGAWWLT) form a helical membrane-spanning segment. The Cytoplasmic portion of the chain corresponds to 258–264 (REGDNGQ).

This sequence belongs to the binding-protein-dependent transport system permease family. CysTW subfamily.

It localises to the cell inner membrane. Probably part of the ABC transporter complex YdcSTUV. Probably responsible for the translocation of the substrate across the membrane. This chain is Inner membrane ABC transporter permease protein YdcV (ydcV), found in Shigella flexneri.